The following is a 274-amino-acid chain: Orotidine 5'-phosphate decarboxylase (274 aa).

Residue K95 is the Proton donor of the active site.

It belongs to the OMP decarboxylase family. Type 2 subfamily.

The enzyme catalyses orotidine 5'-phosphate + H(+) = UMP + CO2. It functions in the pathway pyrimidine metabolism; UMP biosynthesis via de novo pathway; UMP from orotate: step 2/2. The polypeptide is Orotidine 5'-phosphate decarboxylase (Verminephrobacter eiseniae (strain EF01-2)).